The primary structure comprises 391 residues: Oocyte zinc finger protein XlCOF7.2 (391 aa).

4 consecutive C2H2-type zinc fingers follow at residues 284–306 (FPCS…YRTH), 312–334 (YPCS…RRIH), 340–362 (SSCS…HRTH), and 368–391 (YSCS…RRTH).

It belongs to the krueppel C2H2-type zinc-finger protein family.

The protein localises to the nucleus. Its function is as follows. May be involved in transcriptional regulation. This is Oocyte zinc finger protein XlCOF7.2 from Xenopus laevis (African clawed frog).